The following is a 164-amino-acid chain: Lipoprotein signal peptidase (164 aa).

A run of 4 helical transmembrane segments spans residues 8–28 (IVAA…LLFV), 39–59 (VTPF…GWFQ), 64–84 (VGAT…AIWM), and 91–111 (LATI…IDRF). Catalysis depends on residues Asp118 and Asp140. The helical transmembrane segment at 131–151 (YSWYVFNLADVAIVAGVIALL) threads the bilayer.

The protein belongs to the peptidase A8 family.

The protein localises to the cell inner membrane. The enzyme catalyses Release of signal peptides from bacterial membrane prolipoproteins. Hydrolyzes -Xaa-Yaa-Zaa-|-(S,diacylglyceryl)Cys-, in which Xaa is hydrophobic (preferably Leu), and Yaa (Ala or Ser) and Zaa (Gly or Ala) have small, neutral side chains.. The protein operates within protein modification; lipoprotein biosynthesis (signal peptide cleavage). This protein specifically catalyzes the removal of signal peptides from prolipoproteins. This chain is Lipoprotein signal peptidase, found in Nitrobacter hamburgensis (strain DSM 10229 / NCIMB 13809 / X14).